An 874-amino-acid polypeptide reads, in one-letter code: Leucine--tRNA ligase (874 aa).

The 'HIGH' region signature appears at 47 to 57 (PYPSGKLHMGH). The short motif at 636-640 (KMSKS) is the 'KMSKS' region element. Residue Lys639 coordinates ATP.

Belongs to the class-I aminoacyl-tRNA synthetase family.

Its subcellular location is the cytoplasm. It catalyses the reaction tRNA(Leu) + L-leucine + ATP = L-leucyl-tRNA(Leu) + AMP + diphosphate. This Acinetobacter baumannii (strain AB307-0294) protein is Leucine--tRNA ligase.